Reading from the N-terminus, the 698-residue chain is PWWP domain-containing DNA repair factor 3A (698 aa).

Disordered stretches follow at residues 102–145 (TSLS…EDDQ) and 159–386 (CSPK…EEPP). The residue at position 105 (Ser-105) is a Phosphoserine. The span at 129–139 (SQVSSAPSPSF) shows a compositional bias: polar residues. Ser-165, Ser-168, and Ser-170 each carry phosphoserine. Over residues 200-211 (DESQNGSGSQLD) the composition is skewed to polar residues. Basic and acidic residues-rich tracts occupy residues 212 to 235 (HGQE…RGKA) and 341 to 350 (RAGDSDRPEE). Phosphoserine is present on residues Ser-355 and Ser-356. The span at 370-384 (EEEEEEEEEEEEEEE) shows a compositional bias: acidic residues. The PWWP domain maps to 399 to 460 (VGMLVWLKYQ…KHFDCKEKHA (62 aa)).

Belongs to the PWWP3A family. As to quaternary structure, interacts with TP53BP1 (via BRCT domain); the interaction is not dependent on its phosphorylation status. Binds nucleosomes. Interacts with trimethylated 'Lys-36' of histone H3 (H3K36me3) (in vitro).

The protein resides in the nucleus. Its function is as follows. Involved in the DNA damage response pathway by contributing to the maintenance of chromatin architecture. Recruited to the vicinity of DNA breaks by TP53BP1 and plays an accessory role to facilitate damage-induced chromatin changes and promoting chromatin relaxation. Required for efficient DNA repair and cell survival following DNA damage. The protein is PWWP domain-containing DNA repair factor 3A of Rattus norvegicus (Rat).